The following is a 218-amino-acid chain: Glutathione S-transferase-like protein OpS6 (218 aa).

The 82-residue stretch at 5–86 folds into the GST N-terminal domain; sequence QPIKLYAHKK…YLIEQYDKDG (82 aa). One can recognise a GST C-terminal domain in the interval 92 to 218; sequence SLQDKSLARA…KIAATKAALA (127 aa).

It belongs to the GST superfamily.

Its pathway is secondary metabolite biosynthesis. Its function is as follows. Glutathione S-transferase-like protein; part of the gene cluster that mediates the biosynthesis of the bibenzoquinone oosporein, a metabolite required for fungal virulence that acts by evading host immunity to facilitate fungal multiplication in insects. The non-reducing polyketide synthase OpS1 produces orsellinic acid by condensing acetyl-CoA with 3 malonyl-CoA units. Orsellinic acid is then hydroxylated to benzenetriol by the hydroxylase OpS4. The intermediate is oxidized either nonenzymatically to 5,5'-dideoxy-oosporein or enzymatically to benzenetetrol by the oxidoreductase OpS7. The latter is further dimerized to oosporein by the catalase OpS5. OpS6 probably functions en route for protecting cells against oxidative stress by scavenging any leaked free radical form of benzenetetrol by activating the thiol group of glutathione. In Beauveria bassiana (strain ARSEF 2860) (White muscardine disease fungus), this protein is Glutathione S-transferase-like protein OpS6.